The primary structure comprises 640 residues: Arogenate dehydrogenase 1, chloroplastic (640 aa).

Residues 1–18 (MAETLITKPPLSLSFTSL) constitute a chloroplast transit peptide. Prephenate/arogenate dehydrogenase domains lie at 53–334 (LRIA…GEND) and 365–640 (LKIG…LLTS).

Belongs to the prephenate/arogenate dehydrogenase family. As to expression, expressed in roots, stems, leaves, flowers, siliques and seeds. More abundant in seeds.

Its subcellular location is the plastid. It localises to the chloroplast. The catalysed reaction is L-arogenate + NADP(+) = L-tyrosine + CO2 + NADPH. The protein operates within amino-acid biosynthesis; L-tyrosine biosynthesis; L-tyrosine from L-arogenate (NADP(+) route): step 1/1. In terms of biological role, involved in the biosynthesis of tyrosine. Has no prephenate dehydrogenase activity. The protein is Arogenate dehydrogenase 1, chloroplastic (TYRAAT1) of Arabidopsis thaliana (Mouse-ear cress).